A 688-amino-acid chain; its full sequence is G-protein coupled receptor-associated protein LMBRD2 (688 aa).

At 1–3 (MSG) the chain is on the extracellular side. A helical transmembrane segment spans residues 4–21 (AALGLEIVFVFFLALFLL). Topologically, residues 22–32 (HRYGDFKKQHR) are cytoplasmic. A helical transmembrane segment spans residues 33-53 (LVIIATLLAWYLCFLIVFILP). Residues 54–99 (LDVSTTIYNRCKLAVNSSPAESNSSFVTLAPSKQQCFKPWSYIPNG) lie on the Extracellular side of the membrane. Asn76 carries N-linked (GlcNAc...) asparagine glycosylation. A helical membrane pass occupies residues 100–120 (IMPIFWRVVYWTSQFLTWILL). Over 121–144 (PFMQSYARSGGFSITGKIKTALIE) the chain is Cytoplasmic. The chain crosses the membrane as a helical span at residues 145 to 165 (NAIYYGTYLLIFGAFLIYVAV). The Extracellular portion of the chain corresponds to 166–180 (NPKFNLQWNQLQTIG). Residues 181 to 201 (IAAANTWGLFLLVLLLGYGLV) form a helical membrane-spanning segment. At 202-381 (EIPRSHWNGA…ECLLRPWFYR (180 aa)) the chain is on the cytoplasmic side. Positions 222-254 (FKAAKLMTEKADAEENLEDIMEEVRKVSESIKY) form a coiled coil. A helical transmembrane segment spans residues 382 to 402 (VLAVVLAAFSVIVVWSECTFF). Residues 403–426 (STRPVLSLVAVFIQLAEKTYNYIY) are Extracellular-facing. Residues 427–447 (IEMACFLTIFFLSICVYSTVF) traverse the membrane as a helical segment. Over 448 to 467 (RIRVFNYYYLASHHQTDAYS) the chain is Cytoplasmic. Residues 468–488 (LLFSGMLFCRLTPPLCLNFLG) traverse the membrane as a helical segment. The Extracellular segment spans residues 489–515 (LTHMDATISHTDAQPTAYTSIMGSMKV). Residues 516–536 (LSFIADGFYIYYPMLVVILCI) form a helical membrane-spanning segment. Topologically, residues 537-688 (ATYFSLGTRC…MSRSRIFEDV (152 aa)) are cytoplasmic. The span at 600–617 (REDSTRNRVVHTEQKESS) shows a compositional bias: basic and acidic residues. The disordered stretch occupies residues 600–673 (REDSTRNRVV…ESDSGRYQPG (74 aa)). Polar residues predominate over residues 618–634 (FSETNTNRPLSKYTRTN). Residues 635–644 (GRTERDRIEL) are compositionally biased toward basic and acidic residues.

The protein belongs to the LIMR family.

It is found in the cell membrane. May associate with G-protein coupled receptors and regulate downstream signaling pathways. The protein is G-protein coupled receptor-associated protein LMBRD2 of Gallus gallus (Chicken).